Reading from the N-terminus, the 353-residue chain is Photosystem II D2 protein (353 aa).

Residue Thr-2 is modified to N-acetylthreonine. At Thr-2 the chain carries Phosphothreonine. Residues 41–61 form a helical membrane-spanning segment; it reads CAYFALGGWFTGTTFVTSWYT. His-118 serves as a coordination point for chlorophyll a. Residues 125–141 form a helical membrane-spanning segment; it reads GFMLRQFELARSVQLRP. Positions 130 and 143 each coordinate pheophytin a. A helical membrane pass occupies residues 153–166; it reads VFVSVFLIYPLGQS. Residue His-198 participates in chlorophyll a binding. A helical membrane pass occupies residues 208-228; sequence AALLCAIHGATVENTLFEDGD. A plastoquinone-binding residues include His-215 and Phe-262. A Fe cation-binding site is contributed by His-215. His-269 provides a ligand contact to Fe cation. A helical transmembrane segment spans residues 279–295; that stretch reads GLWMSAIGVVGLALNLR.

Belongs to the reaction center PufL/M/PsbA/D family. As to quaternary structure, PSII is composed of 1 copy each of membrane proteins PsbA, PsbB, PsbC, PsbD, PsbE, PsbF, PsbH, PsbI, PsbJ, PsbK, PsbL, PsbM, PsbT, PsbX, PsbY, PsbZ, Psb30/Ycf12, at least 3 peripheral proteins of the oxygen-evolving complex and a large number of cofactors. It forms dimeric complexes. The D1/D2 heterodimer binds P680, chlorophylls that are the primary electron donor of PSII, and subsequent electron acceptors. It shares a non-heme iron and each subunit binds pheophytin, quinone, additional chlorophylls, carotenoids and lipids. There is also a Cl(-1) ion associated with D1 and D2, which is required for oxygen evolution. The PSII complex binds additional chlorophylls, carotenoids and specific lipids. is required as a cofactor.

The protein resides in the plastid. It localises to the chloroplast thylakoid membrane. The enzyme catalyses 2 a plastoquinone + 4 hnu + 2 H2O = 2 a plastoquinol + O2. Its function is as follows. Photosystem II (PSII) is a light-driven water:plastoquinone oxidoreductase that uses light energy to abstract electrons from H(2)O, generating O(2) and a proton gradient subsequently used for ATP formation. It consists of a core antenna complex that captures photons, and an electron transfer chain that converts photonic excitation into a charge separation. The D1/D2 (PsbA/PsbD) reaction center heterodimer binds P680, the primary electron donor of PSII as well as several subsequent electron acceptors. D2 is needed for assembly of a stable PSII complex. The protein is Photosystem II D2 protein of Agrostis stolonifera (Creeping bentgrass).